A 96-amino-acid chain; its full sequence is Small ribosomal subunit protein bS6 (96 aa).

This sequence belongs to the bacterial ribosomal protein bS6 family.

In terms of biological role, binds together with bS18 to 16S ribosomal RNA. The protein is Small ribosomal subunit protein bS6 of Streptomyces griseus subsp. griseus (strain JCM 4626 / CBS 651.72 / NBRC 13350 / KCC S-0626 / ISP 5235).